Here is a 75-residue protein sequence, read N- to C-terminus: Large ribosomal subunit protein bL31 (75 aa).

The protein belongs to the bacterial ribosomal protein bL31 family. Type A subfamily. In terms of assembly, part of the 50S ribosomal subunit.

Functionally, binds the 23S rRNA. In Nitrobacter winogradskyi (strain ATCC 25391 / DSM 10237 / CIP 104748 / NCIMB 11846 / Nb-255), this protein is Large ribosomal subunit protein bL31.